A 349-amino-acid chain; its full sequence is CCN family member 2 (349 aa).

The first 26 residues, 1-26, serve as a signal peptide directing secretion; the sequence is MTAASMGPVRVAFVVLLALCSRPAVG. Residues 27 to 98 form the IGFBP N-terminal domain; that stretch reads QNCSGPCRCP…NRKIGVCTAK (72 aa). Asn-28 is a glycosylation site (N-linked (GlcNAc...) asparagine). Cystine bridges form between Cys-29/Cys-54, Cys-33/Cys-56, Cys-35/Cys-57, Cys-43/Cys-60, Cys-68/Cys-82, and Cys-74/Cys-95. A VWFC domain is found at 101-167; it reads APCIFGGTVY…GKCCEEWVCD (67 aa). Residues 198 to 243 form the TSP type-1 domain; the sequence is NCLVQTTEWSACSKTCGMGISTRVTNDNASCRLEKQSRLCMVRPCE. Residue Asn-225 is glycosylated (N-linked (GlcNAc...) asparagine). The segment at 247 to 349 is heparin-binding; that stretch reads EENIKKGKKC…YYRKMYGDMA (103 aa). Disulfide bonds link Cys-256–Cys-293, Cys-273–Cys-307, Cys-284–Cys-323, Cys-287–Cys-325, and Cys-292–Cys-329. The region spanning 256–330 is the CTCK domain; the sequence is CIRTPKISKP…KTCACHYNCP (75 aa).

Belongs to the CCN family. Monomer. Interacts with TSKU. Expressed in bone marrow and thymic cells. Also expressed one of two Wilms tumors tested.

Its subcellular location is the secreted. The protein resides in the extracellular space. The protein localises to the extracellular matrix. Its function is as follows. Major connective tissue mitoattractant secreted by vascular endothelial cells. Promotes proliferation and differentiation of chondrocytes. Is involved in the stimulation of osteoblast differentiation and has a critical role in osteogenesis. Mediates heparin- and divalent cation-dependent cell adhesion in many cell types including fibroblasts, myofibroblasts, endothelial and epithelial cells. Enhances fibroblast growth factor-induced DNA synthesis. The protein is CCN family member 2 of Homo sapiens (Human).